Reading from the N-terminus, the 337-residue chain is Ribonucleoside-diphosphate reductase small subunit (337 aa).

Positions 1-22 are disordered; it reads MDPAVSPASTDPLDTHASGAGA. Fe cation-binding residues include D91, E121, and H124. The active site involves Y128. The helical transmembrane segment at 177–197 threads the bilayer; that stretch reads FILMILIEGVFFAASFAAIAY. 3 residues coordinate Fe cation: E184, E218, and H221.

It belongs to the ribonucleoside diphosphate reductase small chain family. As to quaternary structure, heterotetramer composed of a homodimer of the large subunit (R1) and a homodimer of the small subunit (R2). Larger multisubunit protein complex are also active, composed of (R1)n(R2)n. The cofactor is Fe cation.

The protein resides in the host membrane. It catalyses the reaction a 2'-deoxyribonucleoside 5'-diphosphate + [thioredoxin]-disulfide + H2O = a ribonucleoside 5'-diphosphate + [thioredoxin]-dithiol. Functionally, ribonucleoside-diphosphate reductase holoenzyme provides the precursors necessary for viral DNA synthesis. Allows virus growth in non-dividing cells, as well as reactivation from latency in infected hosts. Catalyzes the biosynthesis of deoxyribonucleotides from the corresponding ribonucleotides. This Human herpesvirus 2 (strain 333) (HHV-2) protein is Ribonucleoside-diphosphate reductase small subunit.